Consider the following 29-residue polypeptide: GDLPVCGETCFGGTCNTPGCVCAWPVCTR.

A cross-link (cyclopeptide (Gly-Arg)) is located at residues 1–29 (GDLPVCGETCFGGTCNTPGCVCAWPVCTR). 3 disulfides stabilise this stretch: C6–C20, C10–C22, and C15–C27.

This is a cyclic peptide.

Probably participates in a plant defense mechanism. The chain is Cyclotide psyleio C from Psychotria leiocarpa.